Consider the following 454-residue polypeptide: uncharacterized protein (454 aa).

The 45-residue stretch at 1–45 folds into the TRAM domain; the sequence is MAAEGKAIAKVNDLVIFVPYVVPGDVVDLQIKRKKNKYAEAEAVK. [4Fe-4S] cluster contacts are provided by Cys-58, Cys-64, Cys-67, and Cys-160. Residues Gln-286, Tyr-315, Glu-336, and Asp-385 each coordinate S-adenosyl-L-methionine. Cys-412 functions as the Nucleophile in the catalytic mechanism.

The protein belongs to the class I-like SAM-binding methyltransferase superfamily. RNA M5U methyltransferase family.

This is an uncharacterized protein from Bacteroides thetaiotaomicron (strain ATCC 29148 / DSM 2079 / JCM 5827 / CCUG 10774 / NCTC 10582 / VPI-5482 / E50).